Reading from the N-terminus, the 440-residue chain is D-serine dehydratase (440 aa).

Position 116 is an N6-(pyridoxal phosphate)lysine (K116).

It belongs to the serine/threonine dehydratase family. DsdA subfamily. Monomer. The cofactor is pyridoxal 5'-phosphate.

It carries out the reaction D-serine = pyruvate + NH4(+). This Salmonella enteritidis PT4 (strain P125109) protein is D-serine dehydratase.